We begin with the raw amino-acid sequence, 138 residues long: Small ribosomal subunit protein uS11c (138 aa).

The segment at Met1–Asn21 is disordered. The segment covering Gly9–Asn21 has biased composition (basic residues).

Belongs to the universal ribosomal protein uS11 family. Part of the 30S ribosomal subunit.

It is found in the plastid. The protein resides in the chloroplast. The polypeptide is Small ribosomal subunit protein uS11c (Ceratophyllum demersum (Rigid hornwort)).